Reading from the N-terminus, the 165-residue chain is ATP synthase subunit b (165 aa).

The chain crosses the membrane as a helical span at residues 7-27; the sequence is GTSLGNLLIVTGSFILLLLLV.

It belongs to the ATPase B chain family. As to quaternary structure, F-type ATPases have 2 components, F(1) - the catalytic core - and F(0) - the membrane proton channel. F(1) has five subunits: alpha(3), beta(3), gamma(1), delta(1), epsilon(1). F(0) has three main subunits: a(1), b(2) and c(10-14). The alpha and beta chains form an alternating ring which encloses part of the gamma chain. F(1) is attached to F(0) by a central stalk formed by the gamma and epsilon chains, while a peripheral stalk is formed by the delta and b chains.

The protein resides in the cell membrane. In terms of biological role, f(1)F(0) ATP synthase produces ATP from ADP in the presence of a proton or sodium gradient. F-type ATPases consist of two structural domains, F(1) containing the extramembraneous catalytic core and F(0) containing the membrane proton channel, linked together by a central stalk and a peripheral stalk. During catalysis, ATP synthesis in the catalytic domain of F(1) is coupled via a rotary mechanism of the central stalk subunits to proton translocation. Component of the F(0) channel, it forms part of the peripheral stalk, linking F(1) to F(0). The polypeptide is ATP synthase subunit b (Streptococcus mutans serotype c (strain ATCC 700610 / UA159)).